A 323-amino-acid chain; its full sequence is Arginase (323 aa).

Mn(2+)-binding residues include H119, D142, H144, and D146. Substrate is bound by residues 144–148 (HADIN), 155–157 (SKN), and D198. Positions 247 and 249 each coordinate Mn(2+). Residues T261 and E292 each contribute to the substrate site.

Belongs to the arginase family. As to quaternary structure, homotrimer. Mn(2+) serves as cofactor.

The enzyme catalyses L-arginine + H2O = urea + L-ornithine. Its pathway is nitrogen metabolism; urea cycle; L-ornithine and urea from L-arginine: step 1/1. The polypeptide is Arginase (car1) (Schizosaccharomyces pombe (strain 972 / ATCC 24843) (Fission yeast)).